Consider the following 444-residue polypeptide: Tol-Pal system protein TolB (444 aa).

A signal peptide spans 1 to 18 (MKNIIYCILLLFSFNSYA).

It belongs to the TolB family. As to quaternary structure, the Tol-Pal system is composed of five core proteins: the inner membrane proteins TolA, TolQ and TolR, the periplasmic protein TolB and the outer membrane protein Pal. They form a network linking the inner and outer membranes and the peptidoglycan layer.

Its subcellular location is the periplasm. In terms of biological role, part of the Tol-Pal system, which plays a role in outer membrane invagination during cell division and is important for maintaining outer membrane integrity. In Rickettsia bellii (strain OSU 85-389), this protein is Tol-Pal system protein TolB.